We begin with the raw amino-acid sequence, 122 residues long: Small ribosomal subunit protein uS13 (122 aa).

The interval 92–122 is disordered; that stretch reads HRMGLPVRGQRTKTNARTRKGPSKPVSGKKK. Basic residues predominate over residues 101-122; the sequence is QRTKTNARTRKGPSKPVSGKKK.

Belongs to the universal ribosomal protein uS13 family. In terms of assembly, part of the 30S ribosomal subunit. Forms a loose heterodimer with protein S19. Forms two bridges to the 50S subunit in the 70S ribosome.

Functionally, located at the top of the head of the 30S subunit, it contacts several helices of the 16S rRNA. In the 70S ribosome it contacts the 23S rRNA (bridge B1a) and protein L5 of the 50S subunit (bridge B1b), connecting the 2 subunits; these bridges are implicated in subunit movement. Contacts the tRNAs in the A and P-sites. The chain is Small ribosomal subunit protein uS13 from Ruminiclostridium cellulolyticum (strain ATCC 35319 / DSM 5812 / JCM 6584 / H10) (Clostridium cellulolyticum).